Reading from the N-terminus, the 108-residue chain is Glutaredoxin-C10 (108 aa).

Residues 1 to 107 (MERVAKLASE…PMLKNAGALW (107 aa)) form the Glutaredoxin domain. Cys-21 and Cys-24 are oxidised to a cystine. Residues 105–108 (ALWL) carry the Responsive for interaction with TGA factors motif.

Belongs to the glutaredoxin family. CC-type subfamily.

The protein localises to the cytoplasm. The protein resides in the nucleus. Has a glutathione-disulfide oxidoreductase activity in the presence of NADPH and glutathione reductase. Reduces low molecular weight disulfides and proteins. The chain is Glutaredoxin-C10 (GRXC10) from Oryza sativa subsp. japonica (Rice).